A 188-amino-acid chain; its full sequence is MNLPESIQKGILLIIELGILLGSMGVILLNDIVQSAFSLGLTFISISLLYLVLNADFVAAAQVLIYVGAINVLIVFSVMLIQKPHKNEDLSTSRNTGNNITLIVCTSLFLFLVSIILDTSWSQIYSIKKSTKIFEPILKSNVQLIGSQLLTEFLLPFELLSVLLLVALVGAITMSRQSRMFEMPDDEI.

Transmembrane regions (helical) follow at residues 10 to 30, 32 to 52, 61 to 81, 97 to 117, and 153 to 173; these read GILLIIELGILLGSMGVILLN, IVQSAFSLGLTFISISLLYLV, AQVLIYVGAINVLIVFSVMLI, GNNITLIVCTSLFLFLVSIIL, and FLLPFELLSVLLLVALVGAIT.

The protein belongs to the complex I subunit 6 family. NDH is composed of at least 16 different subunits, 5 of which are encoded in the nucleus.

It is found in the plastid. It localises to the chloroplast thylakoid membrane. The catalysed reaction is a plastoquinone + NADH + (n+1) H(+)(in) = a plastoquinol + NAD(+) + n H(+)(out). It catalyses the reaction a plastoquinone + NADPH + (n+1) H(+)(in) = a plastoquinol + NADP(+) + n H(+)(out). In terms of biological role, NDH shuttles electrons from NAD(P)H:plastoquinone, via FMN and iron-sulfur (Fe-S) centers, to quinones in the photosynthetic chain and possibly in a chloroplast respiratory chain. The immediate electron acceptor for the enzyme in this species is believed to be plastoquinone. Couples the redox reaction to proton translocation, and thus conserves the redox energy in a proton gradient. The polypeptide is NAD(P)H-quinone oxidoreductase subunit 6, chloroplastic (ndhG) (Psilotum nudum (Whisk fern)).